We begin with the raw amino-acid sequence, 635 residues long: MAGUK p55 subfamily member 4 (635 aa).

Residues 1-16 show a composition bias toward basic and acidic residues; sequence MRQSDRGAELTNEDRA. A disordered region spans residues 1-23; sequence MRQSDRGAELTNEDRALPTPPDP. L27 domains follow at residues 23-79 and 86-136; these read PENG…EKKL and AQIL…FEPL. The PDZ domain maps to 153–234; the sequence is IVCLVKNQQP…TIMFKVIPVS (82 aa). The 71-residue stretch at 241–311 folds into the SH3 domain; the sequence is QKMVYVRAMI…PSNHLLKRKQ (71 aa). Positions 426-615 constitute a Guanylate kinase-like domain; the sequence is HRLIVLVGPS…ACGQLLSAIQ (190 aa). The stretch at 567–622 forms a coiled coil; sequence VDMKFKDEDLQEMEELAQKMESQFGQFFDHVIVNDNLQDACGQLLSAIQKAQEELQ.

The protein belongs to the MAGUK family. May interact with GRIA2. Interacts with MPDZ. Forms a complex with CRB1 and PALS1. Interacts with FASLG. As to expression, detected in the retina (at protein level). Highly enriched in the retina where it is mainly expressed by rod photoreceptors; detected in the inner segment of the photoreceptor layer and in the outer nuclear layer. Also detected at much lower levels in pineal gland, cerebellum, cortex, hippocampus, olfactory bulb, heart, liver and spleen. Expressed in the CA1-CA3 regions of pyramidal cell layers and in the granule cell layer of dentate gyrus in the hippocampus. In the cerebellum, expressed in Purkinje cells and throughout the granule cell layer. In the olfactory bulb, expressed in mitral cells.

It is found in the cytoplasm. Its function is as follows. May play a role in retinal photoreceptors development. The chain is MAGUK p55 subfamily member 4 (Mpp4) from Mus musculus (Mouse).